The chain runs to 239 residues: Segregation and condensation protein A (239 aa).

Belongs to the ScpA family. In terms of assembly, component of a cohesin-like complex composed of ScpA, ScpB and the Smc homodimer, in which ScpA and ScpB bind to the head domain of Smc. The presence of the three proteins is required for the association of the complex with DNA.

Its subcellular location is the cytoplasm. Participates in chromosomal partition during cell division. May act via the formation of a condensin-like complex containing Smc and ScpB that pull DNA away from mid-cell into both cell halves. This Streptococcus suis (strain 98HAH33) protein is Segregation and condensation protein A.